The following is a 107-amino-acid chain: Nucleoid-associated protein RT0857 (107 aa).

This sequence belongs to the YbaB/EbfC family. Homodimer.

The protein resides in the cytoplasm. It localises to the nucleoid. In terms of biological role, binds to DNA and alters its conformation. May be involved in regulation of gene expression, nucleoid organization and DNA protection. The polypeptide is Nucleoid-associated protein RT0857 (Rickettsia typhi (strain ATCC VR-144 / Wilmington)).